Reading from the N-terminus, the 456-residue chain is Multidrug resistance protein NorM (456 aa).

12 consecutive transmembrane segments (helical) span residues 11 to 31, 53 to 73, 92 to 112, 126 to 146, 159 to 179, 189 to 209, 242 to 262, 268 to 288, 314 to 334, 356 to 376, 385 to 405, and 417 to 437; these read LIKL…MGFV, IWLP…PVVA, VVLA…TQFI, TVGY…FQTL, AMVI…IFVY, GVGC…LLLA, FPVA…ALLV, IIVA…MLPM, SRVG…ITVL, LLLF…AAGA, AIFN…GYIL, and AQGF…MLGV.

This sequence belongs to the multi antimicrobial extrusion (MATE) (TC 2.A.66.1) family.

Its subcellular location is the cell inner membrane. Multidrug efflux pump that functions as a Na(+)/drug antiporter. Confers resistance to several drugs, such as norfloxacin, ciprofloxacin, ethidium, kanamycin and streptomycin. This is Multidrug resistance protein NorM (norM) from Vibrio parahaemolyticus serotype O3:K6 (strain RIMD 2210633).